A 663-amino-acid chain; its full sequence is Telomere length regulator taz1 (663 aa).

Residues 15–72 form a disordered region; it reads ENEGDQQFDKEVVQNSDSNIETGQISDSLTKAVEERAETESSSNLSNFTTSESESSKP. Polar residues-rich tracts occupy residues 27–43 and 54–67; these read VQNS…SDSL and ESSS…TSES. S332 bears the Phosphoserine mark. Disordered regions lie at residues 389-412 and 471-554; these read GSTA…TFSE and RAKS…PYEG. Basic and acidic residues-rich tracts occupy residues 489 to 498 and 512 to 524; these read KRGDNLRREA and PPVR…ESRS. The region spanning 556–612 is the Myb-like domain; that stretch reads RTRRKWTDEEENELYEMISQHGCCWSKIIHIQKLENGPLKTFGPTQIKDKARLIKAR.

In terms of assembly, interacts with taf1 via the Myb domain, and ccq1.

It localises to the cytoplasm. The protein localises to the nucleus. Its subcellular location is the chromosome. The protein resides in the telomere. Its function is as follows. Regulates telomere length and function. Required for the repression of telomere-adjacent gene expression and for normal meiosis or sporulation. It may be a negative regulator of the telomere-replicating enzyme, telomerase, or may protect against activation of telomerase-independent pathways of telomere elongation. It may be involved in the interactions between chromosomes and spindle proteins, disruption of these interactions would lead to defective meiosis. The protein is Telomere length regulator taz1 (taz1) of Schizosaccharomyces pombe (strain 972 / ATCC 24843) (Fission yeast).